Here is a 102-residue protein sequence, read N- to C-terminus: Large ribosomal subunit protein bL21 (102 aa).

It belongs to the bacterial ribosomal protein bL21 family. In terms of assembly, part of the 50S ribosomal subunit. Contacts protein L20.

Its function is as follows. This protein binds to 23S rRNA in the presence of protein L20. The polypeptide is Large ribosomal subunit protein bL21 (Zymomonas mobilis subsp. mobilis (strain ATCC 31821 / ZM4 / CP4)).